The sequence spans 948 residues: Bifunctional glutamine synthetase adenylyltransferase/adenylyl-removing enzyme (948 aa).

The adenylyl removase stretch occupies residues 1–444 (MSLPSALLPT…VFATLIGEED (444 aa)). Residues 452–948 (ARHFHELWDM…VIQAWQQWLG (497 aa)) are adenylyl transferase.

Belongs to the GlnE family. Mg(2+) is required as a cofactor.

It carries out the reaction [glutamine synthetase]-O(4)-(5'-adenylyl)-L-tyrosine + phosphate = [glutamine synthetase]-L-tyrosine + ADP. The catalysed reaction is [glutamine synthetase]-L-tyrosine + ATP = [glutamine synthetase]-O(4)-(5'-adenylyl)-L-tyrosine + diphosphate. In terms of biological role, involved in the regulation of glutamine synthetase GlnA, a key enzyme in the process to assimilate ammonia. When cellular nitrogen levels are high, the C-terminal adenylyl transferase (AT) inactivates GlnA by covalent transfer of an adenylyl group from ATP to specific tyrosine residue of GlnA, thus reducing its activity. Conversely, when nitrogen levels are low, the N-terminal adenylyl removase (AR) activates GlnA by removing the adenylyl group by phosphorolysis, increasing its activity. The regulatory region of GlnE binds the signal transduction protein PII (GlnB) which indicates the nitrogen status of the cell. The chain is Bifunctional glutamine synthetase adenylyltransferase/adenylyl-removing enzyme from Vibrio cholerae serotype O1 (strain ATCC 39315 / El Tor Inaba N16961).